Consider the following 500-residue polypeptide: Maturase K (500 aa).

The protein belongs to the intron maturase 2 family. MatK subfamily.

It is found in the plastid. It localises to the chloroplast. Functionally, usually encoded in the trnK tRNA gene intron. Probably assists in splicing its own and other chloroplast group II introns. The protein is Maturase K of Prunus laurocerasus (Cherry laurel).